The chain runs to 3574 residues: Chromatin structure-remodeling complex protein SYD (3574 aa).

Disordered regions lie at residues Ser-76–Asn-105, Thr-123–Asp-211, and Asp-328–Ser-372. Composition is skewed to polar residues over residues Ser-124–Arg-148 and Pro-155–His-168. Residues Asn-169–Ser-181 are compositionally biased toward basic and acidic residues. Positions Trp-194–Phe-204 are enriched in polar residues. A compositionally biased stretch (basic and acidic residues) spans Arg-358–Ser-372. The HSA domain occupies Gln-573–Ile-647. The region spanning Val-766–Asn-933 is the Helicase ATP-binding domain. Position 779 to 786 (Asp-779 to Thr-786) interacts with ATP. The short motif at Asp-884–His-887 is the DEAH box element. The Helicase C-terminal domain occupies Met-1077–Thr-1223. The short motif at Ala-1266–Asp-1273 is the Nuclear localization signal element. 19 disordered regions span residues Lys-1342–Thr-1472, His-1500–Glu-1575, Ile-1588–His-1637, Gly-1690–Val-1811, Gln-1830–Asp-1868, Ser-2040–Asn-2068, Ser-2089–Val-2115, Ser-2143–Ile-2162, Leu-2179–Asp-2220, Glu-2235–Asp-2338, Glu-2350–Asp-2451, Phe-2517–Glu-2538, Ser-2684–Asp-2703, Ile-2718–Arg-2759, Asp-2865–Leu-2884, Glu-3017–Ser-3045, Asn-3189–Lys-3208, Val-3316–Met-3337, and Thr-3512–Val-3574. The span at Ala-1362–Lys-1371 shows a compositional bias: basic and acidic residues. 2 stretches are compositionally biased toward polar residues: residues Ser-1399–Thr-1426 and His-1500–Asp-1511. A compositionally biased stretch (basic residues) spans Gly-1532–Gly-1546. 2 stretches are compositionally biased toward polar residues: residues Gly-1555–Ala-1571 and Glu-1597–Thr-1614. The span at Arg-1617 to Asp-1627 shows a compositional bias: basic and acidic residues. 6 stretches are compositionally biased toward polar residues: residues Gly-1690–Ser-1699, Lys-1706–Glu-1752, Asp-1796–Thr-1806, His-1832–Gln-1849, Ser-2040–Ala-2057, and Ser-2090–Ser-2110. Acidic residues predominate over residues Asp-2248–Val-2260. A compositionally biased stretch (basic and acidic residues) spans Asp-2438–Asp-2451. The span at Ile-2718–Gln-2735 shows a compositional bias: polar residues. Composition is skewed to polar residues over residues Lys-3034–Ser-3045 and Asp-3191–Ser-3204. A compositionally biased stretch (basic and acidic residues) spans Lys-3523–Gly-3538.

It belongs to the SNF2/RAD54 helicase family. In terms of assembly, interacts with LFY. Binds to BARD1/ROW1. Post-translationally, phosphorylated. Mostly expressed in rapidly dividing cells in the vegetative, inflorescence, and root meristems, as well as in young leaf and flower primordia. Isoform 1 is predominantly found in seedlings whereas isoform 2 is present in both seedlings and inflorescences (at protein level).

The protein localises to the cytoplasm. Its subcellular location is the nucleus. In terms of biological role, catalytic component of the chromatin structure-remodeling complex (RSC), which is involved in transcription regulation and nucleosome positioning. Controls stem cell fate via the transcription regulation of WUS in the shoot apical meristem, by modulating its promoter. LFY-dependent repressor of the meristem identity switch from vegetative to reproductive development probably by modulating chromatin state. Involved in the regulation of floral homeotic gene expression in response to environmental stimuli. Required for carpel and ovule development, and for cotyledon separation via the regulation of CUC2 transcription. Regulates the promoters of several genes downstream of the jasmonate (JA) and ethylene (ET) signaling pathways. Required for resistance against the necrotrophic pathogen B.cinerea but not the biotrophic pathogen P.syringae. This chain is Chromatin structure-remodeling complex protein SYD (SYD), found in Arabidopsis thaliana (Mouse-ear cress).